Reading from the N-terminus, the 378-residue chain is MSLSIADQNKLDAFWSYCVKNRYFNIGYPESADFDYTMLERFLRFSINNCGDWGEYCNYLLNSFDFEKEVMEYFSGIFKIPFAESWGYVTNGGTESNMFGCYLGRELFPEGTLYYSKDTHYSVAKIVKLLRIKSQLVESQPDGEMDYDDLINKIRTSGERHPIIFANIGTTVRGAVDNIAEIQKRIAALGIPREDYYLHADAALSGMILPFVEDPQPFTFADGIDSIGVSGHKMIGSPIPCGIVVAKKANVDRISVEIDYISAHDKTISGSRNGHTPLMMWAAVRSHTDAEWHRRIGHSLNMAKYAVDRFKAAGIDALCHKNSITVVFPKPSEWVWKKHCLATSGNVAHLITTAHHLDSSRIDALIDDVIADLAQRAA.

H120 lines the substrate pocket. K233 carries the N6-(pyridoxal phosphate)lysine modification.

Belongs to the group II decarboxylase family. In terms of assembly, homotetramer. Pyridoxal 5'-phosphate is required as a cofactor.

It catalyses the reaction L-histidine + H(+) = histamine + CO2. The protein is Histidine decarboxylase (hdc) of Klebsiella aerogenes (Enterobacter aerogenes).